A 499-amino-acid polypeptide reads, in one-letter code: GTPase Der (499 aa).

EngA-type G domains lie at 3–166 (PVVA…MDEV) and 211–384 (IKLA…DCST). Residues 9–16 (GRPNVGKS), 56–60 (DTGGI), 118–121 (NKTD), 217–224 (GRPNVGKS), 264–268 (DTAGV), and 329–332 (NKWD) each bind GTP. The 85-residue stretch at 385-469 (RRVNTSMLTR…PIRIQFKEGD (85 aa)) folds into the KH-like domain.

The protein belongs to the TRAFAC class TrmE-Era-EngA-EngB-Septin-like GTPase superfamily. EngA (Der) GTPase family. Associates with the 50S ribosomal subunit.

Its function is as follows. GTPase that plays an essential role in the late steps of ribosome biogenesis. This Erwinia tasmaniensis (strain DSM 17950 / CFBP 7177 / CIP 109463 / NCPPB 4357 / Et1/99) protein is GTPase Der.